The following is a 435-amino-acid chain: MEAKLEVTGKEVIKPASPSPRDRLQLSILDLYCPGIYVSTIFFYDLITESSEVFSENLKLSLSETLSRFYPLAGRIEGLSISCNDEGAVFTEARTDLLLPDFLRNLNTDSLSGFLPTLAAGESPAAWPLLSVKVTFFGSGSGVAVSVSVSHKICDIASLVTFVKDWATTTAKGKSNSTIEFAETTIYPPPPSHMYEQFPSTDSDSNITSKYVLKRFVFEPSKIAELKHKAASESVPVPTRVEAIMSLIWRCARNSSRSNLLIPRQAVMWQAMDIRLRIPSSVAPKDVIGNLQSGFSLKKDAESEFEIPEIVATFRKNKERVNEMIKESLQGNTIGQSLLSLMAETVSESTEIDRYIMSSWCRKPFYEVDFGSGSPVWVGYASHTIYDNMVGVVLIDSKEGDGVEAWISLPEEDMSVFVDDQELLAYAVLNPPVVA.

Residues His151 and Asp369 each act as proton acceptor in the active site.

It belongs to the plant acyltransferase family. In terms of tissue distribution, mostly expressed in roots (particularly in the root elongation zone), and, to a lower extent, in seedling, leaves (especially in hydathodes), siliques (e.g. in developing seeds) and flowers.

It is found in the cytoplasm. Its function is as follows. Monitors brassinosteroids (BR) responses and homeostasis, particularly in the root and hypocotyl in darkness. Promotes flavonoid biosynthesis. This chain is BAHD acyltransferase BIA1, found in Arabidopsis thaliana (Mouse-ear cress).